The sequence spans 123 residues: F-box protein PP2-B3 (123 aa).

Residues 10 to 56 form the F-box domain; it reads PSPFDGLPENCISNIISFTTPRDACFAASVSKAFESAVQSDSVWEKF.

The sequence is that of F-box protein PP2-B3 (PP2B3) from Arabidopsis thaliana (Mouse-ear cress).